Reading from the N-terminus, the 143-residue chain is Interleukin-4 (143 aa).

An N-terminal signal peptide occupies residues 1 to 19 (MGLSPQLAAVLLCLLVCTG). Disulfide bonds link Cys48/Cys88 and Cys70/Cys115. N-linked (GlcNAc...) asparagine glycosylation is found at Asn62 and Asn91.

This sequence belongs to the IL-4/IL-13 family.

It localises to the secreted. Its function is as follows. Participates in at least several B-cell activation processes as well as of other cell types. It is a costimulator of DNA-synthesis. It induces the expression of class II MHC molecules on resting B-cells. It enhances both secretion and cell surface expression of IgE and IgG1. It also regulates the expression of the low affinity Fc receptor for IgE (CD23) on both lymphocytes and monocytes. Positively regulates IL31RA expression in macrophages. Stimulates autophagy in dendritic cells by interfering with mTORC1 signaling and through the induction of RUFY4. This is Interleukin-4 (IL4) from Meriones unguiculatus (Mongolian jird).